The chain runs to 1136 residues: Carbamoyl phosphate synthase large chain (1136 aa).

Positions Met-1–Asp-402 are carboxyphosphate synthetic domain. Residues Arg-129, Arg-169, Gly-175, Gly-176, Glu-208, Ile-210, Glu-215, Gly-241, Val-242, His-243, Gln-285, and Glu-299 each contribute to the ATP site. The 196-residue stretch at Lys-133–Leu-328 folds into the ATP-grasp 1 domain. Mg(2+) contacts are provided by Gln-285, Glu-299, and Asn-301. Residues Gln-285, Glu-299, and Asn-301 each coordinate Mn(2+). Residues Lys-403–Thr-551 form an oligomerization domain region. Positions Glu-552 to Tyr-962 are carbamoyl phosphate synthetic domain. An ATP-grasp 2 domain is found at Gly-681–Ala-881. Positions 717, 765, 767, 772, 797, 798, 799, 800, 840, and 852 each coordinate ATP. The Mg(2+) site is built by Gln-840, Glu-852, and Asn-854. Mn(2+) is bound by residues Gln-840, Glu-852, and Asn-854. The segment at Glu-963 to Gln-1136 is allosteric domain. The region spanning Gly-964–Leu-1122 is the MGS-like domain.

The protein belongs to the CarB family. In terms of assembly, composed of two chains; the small (or glutamine) chain promotes the hydrolysis of glutamine to ammonia, which is used by the large (or ammonia) chain to synthesize carbamoyl phosphate. Tetramer of heterodimers (alpha,beta)4. Mg(2+) is required as a cofactor. It depends on Mn(2+) as a cofactor.

The enzyme catalyses hydrogencarbonate + L-glutamine + 2 ATP + H2O = carbamoyl phosphate + L-glutamate + 2 ADP + phosphate + 2 H(+). The catalysed reaction is hydrogencarbonate + NH4(+) + 2 ATP = carbamoyl phosphate + 2 ADP + phosphate + 2 H(+). Its pathway is amino-acid biosynthesis; L-arginine biosynthesis; carbamoyl phosphate from bicarbonate: step 1/1. It functions in the pathway pyrimidine metabolism; UMP biosynthesis via de novo pathway; (S)-dihydroorotate from bicarbonate: step 1/3. Large subunit of the glutamine-dependent carbamoyl phosphate synthetase (CPSase). CPSase catalyzes the formation of carbamoyl phosphate from the ammonia moiety of glutamine, carbonate, and phosphate donated by ATP, constituting the first step of 2 biosynthetic pathways, one leading to arginine and/or urea and the other to pyrimidine nucleotides. The large subunit (synthetase) binds the substrates ammonia (free or transferred from glutamine from the small subunit), hydrogencarbonate and ATP and carries out an ATP-coupled ligase reaction, activating hydrogencarbonate by forming carboxy phosphate which reacts with ammonia to form carbamoyl phosphate. This chain is Carbamoyl phosphate synthase large chain, found in Bifidobacterium animalis subsp. lactis (strain AD011).